Consider the following 394-residue polypeptide: Chalcone synthase 8 (394 aa).

Residue C165 is part of the active site.

This sequence belongs to the thiolase-like superfamily. Chalcone/stilbene synthases family.

The catalysed reaction is (E)-4-coumaroyl-CoA + 3 malonyl-CoA + 3 H(+) = 2',4,4',6'-tetrahydroxychalcone + 3 CO2 + 4 CoA. It participates in secondary metabolite biosynthesis; flavonoid biosynthesis. Its function is as follows. The primary product of this enzyme is 4,2',4',6'-tetrahydroxychalcone (also termed naringenin-chalcone or chalcone) which can under specific conditions spontaneously isomerize into naringenin. The chain is Chalcone synthase 8 (CHS8) from Bromheadia finlaysoniana (Orchid).